We begin with the raw amino-acid sequence, 149 residues long: Large ribosomal subunit protein eL24B (149 aa).

Position 50 is a phosphoserine (serine 50). A disordered region spans residues 96–149 (QRPEVRAAARAAALKQRKDKRAASESEKKAIKAKSAASSARGQAIKNAKVAARR). Positions 116 to 125 (RAASESEKKA) are enriched in basic and acidic residues.

This sequence belongs to the eukaryotic ribosomal protein eL24 family. Component of the large ribosomal subunit (LSU). Mature yeast ribosomes consist of a small (40S) and a large (60S) subunit. The 40S small subunit contains 1 molecule of ribosomal RNA (18S rRNA) and at least 33 different proteins. The large 60S subunit contains 3 rRNA molecules (25S, 5.8S and 5S rRNA) and at least 46 different proteins.

It is found in the cytoplasm. Functionally, component of the ribosome, a large ribonucleoprotein complex responsible for the synthesis of proteins in the cell. The small ribosomal subunit (SSU) binds messenger RNAs (mRNAs) and translates the encoded message by selecting cognate aminoacyl-transfer RNA (tRNA) molecules. The large subunit (LSU) contains the ribosomal catalytic site termed the peptidyl transferase center (PTC), which catalyzes the formation of peptide bonds, thereby polymerizing the amino acids delivered by tRNAs into a polypeptide chain. The nascent polypeptides leave the ribosome through a tunnel in the LSU and interact with protein factors that function in enzymatic processing, targeting, and the membrane insertion of nascent chains at the exit of the ribosomal tunnel. The protein is Large ribosomal subunit protein eL24B (rpl2402) of Schizosaccharomyces pombe (strain 972 / ATCC 24843) (Fission yeast).